Here is a 518-residue protein sequence, read N- to C-terminus: Reduced folate transporter (518 aa).

Met-1 carries the N-acetylmethionine modification. The Cytoplasmic portion of the chain corresponds to Met-1–Val-29. Residues Phe-30 to Pro-50 form a helical membrane-spanning segment. Positions 48 and 49 each coordinate folate. The Extracellular portion of the chain corresponds to Tyr-51–Val-62. N-linked (GlcNAc...) asparagine glycosylation is present at Asn-56. A helical transmembrane segment spans residues Thr-63–Thr-85. The Cytoplasmic portion of the chain corresponds to Asp-86–Arg-89. The chain crosses the membrane as a helical span at residues Tyr-90 to Leu-110. The Extracellular portion of the chain corresponds to Gly-111–Val-114. Residues Val-115–Tyr-137 traverse the membrane as a helical segment. Folate-binding residues include Glu-121 and Arg-131. Topologically, residues Ile-138 to Ala-151 are cytoplasmic. A helical membrane pass occupies residues Ser-152–Glu-176. Residue Val-162 coordinates folate. The Extracellular portion of the chain corresponds to Gln-177–Asn-181. A helical transmembrane segment spans residues Ser-182–Ser-200. Topologically, residues Leu-201–Gln-266 are cytoplasmic. Residues Pro-267–Val-292 traverse the membrane as a helical segment. The folate site is built by Ala-281, Gly-282, and Ile-286. Residues Leu-293–Leu-300 lie on the Extracellular side of the membrane. A helical membrane pass occupies residues Asn-301–Phe-323. Over Val-324 to Ala-329 the chain is Cytoplasmic. A helical membrane pass occupies residues Leu-330–Met-350. The Extracellular portion of the chain corresponds to Tyr-351–Val-353. Residues His-354–Gln-377 form a helical membrane-spanning segment. Positions 366 and 370 each coordinate folate. At Phe-378–Leu-391 the chain is on the cytoplasmic side. A helical transmembrane segment spans residues Ser-392–Thr-415. The interval Ala-407–Ser-419 is required for substrate-binding. At Leu-416–Gly-423 the chain is on the extracellular side. The chain crosses the membrane as a helical span at residues Leu-424–Val-448. Over Gly-449–Leu-512 the chain is Cytoplasmic. A phosphoserine mark is found at Ser-473, Ser-478, and Ser-483. The disordered stretch occupies residues Gln-480–Ala-518.

It belongs to the reduced folate carrier (RFC) transporter (TC 2.A.48) family.

It localises to the cell membrane. It is found in the apical cell membrane. Its subcellular location is the basolateral cell membrane. The enzyme catalyses 5-amino-1-(5-phospho-beta-D-ribosyl)imidazole-4-carboxamide(in) + (6S)-5-methyl-5,6,7,8-tetrahydrofolate(out) = 5-amino-1-(5-phospho-beta-D-ribosyl)imidazole-4-carboxamide(out) + (6S)-5-methyl-5,6,7,8-tetrahydrofolate(in). Functionally, antiporter that mediates the import of reduced folates, driven by the export of organic anions. Also acts as an importer of immunoreactive cyclic dinucleotides, but with a lower transporter activity. Mechanistically, acts as a secondary active transporter, which exports intracellular organic anions down their concentration gradients to facilitate the uptake of its substrates. Has high affinity for N5-methyltetrahydrofolate, the predominant circulating form of folate. Also mediates the import of antifolate drug methotrexate. 5-amino-4-imidazolecarboxamide riboside (AICAR), when phosphorylated to AICAR monophosphate, can serve as an organic anion for antiporter activity. This is Reduced folate transporter from Cricetulus griseus (Chinese hamster).